The following is a 259-amino-acid chain: Thiazole synthase (259 aa).

Catalysis depends on lysine 99, which acts as the Schiff-base intermediate with DXP. Residues glycine 160, 187–188, and 209–210 each bind 1-deoxy-D-xylulose 5-phosphate; these read AG and NT.

It belongs to the ThiG family. Homotetramer. Forms heterodimers with either ThiH or ThiS.

The protein resides in the cytoplasm. The catalysed reaction is [ThiS sulfur-carrier protein]-C-terminal-Gly-aminoethanethioate + 2-iminoacetate + 1-deoxy-D-xylulose 5-phosphate = [ThiS sulfur-carrier protein]-C-terminal Gly-Gly + 2-[(2R,5Z)-2-carboxy-4-methylthiazol-5(2H)-ylidene]ethyl phosphate + 2 H2O + H(+). It participates in cofactor biosynthesis; thiamine diphosphate biosynthesis. Functionally, catalyzes the rearrangement of 1-deoxy-D-xylulose 5-phosphate (DXP) to produce the thiazole phosphate moiety of thiamine. Sulfur is provided by the thiocarboxylate moiety of the carrier protein ThiS. In vitro, sulfur can be provided by H(2)S. This chain is Thiazole synthase, found in Solibacter usitatus (strain Ellin6076).